We begin with the raw amino-acid sequence, 245 residues long: Orotidine 5'-phosphate decarboxylase (245 aa).

Residues aspartate 22, lysine 44, 71-80, threonine 131, arginine 192, glutamine 201, glycine 221, and arginine 222 each bind substrate; that span reads DLKFHDIPNT. Residue lysine 73 is the Proton donor of the active site.

Belongs to the OMP decarboxylase family. Type 1 subfamily. Homodimer.

The catalysed reaction is orotidine 5'-phosphate + H(+) = UMP + CO2. The protein operates within pyrimidine metabolism; UMP biosynthesis via de novo pathway; UMP from orotate: step 2/2. Its function is as follows. Catalyzes the decarboxylation of orotidine 5'-monophosphate (OMP) to uridine 5'-monophosphate (UMP). The polypeptide is Orotidine 5'-phosphate decarboxylase (Shigella flexneri serotype 5b (strain 8401)).